The chain runs to 236 residues: Ras-related protein RabY (236 aa).

18–25 (GDRKTGKT) contributes to the GTP binding site. The short motif at 40-48 (YRQTNLLHF) is the Effector region element. GTP is bound by residues 66–70 (DSQAD) and 126–129 (NKSD). Positions 192 to 225 (QQQQQQQQQQQQQQQQQQQQQQQQQQQQQQQHQQ) are enriched in low complexity. A disordered region spans residues 192–236 (QQQQQQQQQQQQQQQQQQQQQQQQQQQQQQQHQQSSKTKIGCLIQ). Cys-233 is modified (cysteine methyl ester). Cys-233 carries S-geranylgeranyl cysteine lipidation. Positions 234–236 (LIQ) are cleaved as a propeptide — removed in mature form.

This sequence belongs to the small GTPase superfamily. Rab family.

Its subcellular location is the cell membrane. In Dictyostelium discoideum (Social amoeba), this protein is Ras-related protein RabY (rabY).